We begin with the raw amino-acid sequence, 247 residues long: ATP synthase subunit a, chloroplastic (247 aa).

The next 5 membrane-spanning stretches (helical) occupy residues 38 to 58 (QVLI…VIAV), 95 to 115 (VPFI…GALL), 134 to 154 (INTT…AGLS), 199 to 219 (LVVV…VMFL), and 220 to 240 (GLFT…AYIG).

Belongs to the ATPase A chain family. In terms of assembly, F-type ATPases have 2 components, CF(1) - the catalytic core - and CF(0) - the membrane proton channel. CF(1) has five subunits: alpha(3), beta(3), gamma(1), delta(1), epsilon(1). CF(0) has four main subunits: a, b, b' and c.

It is found in the plastid. The protein resides in the chloroplast thylakoid membrane. Its function is as follows. Key component of the proton channel; it plays a direct role in the translocation of protons across the membrane. In Agrostis stolonifera (Creeping bentgrass), this protein is ATP synthase subunit a, chloroplastic.